Consider the following 60-residue polypeptide: UPF0434 protein Ent638_1436 (60 aa).

The protein belongs to the UPF0434 family.

In Enterobacter sp. (strain 638), this protein is UPF0434 protein Ent638_1436.